We begin with the raw amino-acid sequence, 548 residues long: Tyrosine-protein phosphatase non-receptor type 61F (548 aa).

At 1-525 the chain is on the cytoplasmic side; it reads MSEQKTSGSG…KQLAAKKRRS (525 aa). The 264-residue stretch at 33 to 296 folds into the Tyrosine-protein phosphatase domain; that stretch reads FYKEICETCD…DFSYQAIIEG (264 aa). Residues 46 to 65 form a disordered region; sequence KEKQFSTSESERHTNRGLNR. Position 83 is a phosphoserine (Ser-83). Tyr-86 is modified (phosphotyrosine). Substrate-binding positions include Asp-203, 237–243, and Gln-281; that span reads CSAGIGR. Cys-237 (phosphocysteine intermediate) is an active-site residue. 3 consecutive short sequence motifs (PXXP motif (SH3-binding)) follow at residues 327–330, 339–342, and 394–397; these read PPLP and PLAP. The interval 386-517 is disordered; sequence EVADSRPLPP…RKQRENEDKQ (132 aa). Acidic residues predominate over residues 404-428; sequence SDSDEDYLLDDDDEDDTDEDEEYET. 2 short sequence motifs (PXXP motif (SH3-binding)) span residues 459–462 and 480–483; these read PAVP and PASP. The span at 502 to 517 shows a compositional bias: basic and acidic residues; the sequence is KVNDMKRKQRENEDKQ. A helical transmembrane segment spans residues 526-545; the sequence is LLTYIAAGVVVGVICAYAYT. The Extracellular segment spans residues 546 to 548; that stretch reads KLG.

The protein belongs to the protein-tyrosine phosphatase family. Non-receptor class 1 subfamily. In terms of assembly, interacts (via C-terminus) with dock/dreadlocks; this interaction is independent of insulin stimulation and is required for dephosphorylation of the insulin-like receptor InR.

It is found in the cytoplasm. The protein resides in the membrane. The protein localises to the endomembrane system. Its subcellular location is the nucleus. The catalysed reaction is O-phospho-L-tyrosyl-[protein] + H2O = L-tyrosyl-[protein] + phosphate. Non-receptor protein tyrosine phosphatase. Required for maintaining dock/dreadlocks in its non-phosphorylated state. Negative regulator of InR/insulin-like receptor signaling through dephosphorylation of tyrosines when recruited by dock/dreadlocks. The protein is Tyrosine-protein phosphatase non-receptor type 61F of Drosophila melanogaster (Fruit fly).